A 475-amino-acid polypeptide reads, in one-letter code: UDP-N-acetylmuramoylalanine--D-glutamate ligase (475 aa).

Residue 130 to 136 (GTNGKTT) participates in ATP binding.

The protein belongs to the MurCDEF family.

The protein localises to the cytoplasm. It carries out the reaction UDP-N-acetyl-alpha-D-muramoyl-L-alanine + D-glutamate + ATP = UDP-N-acetyl-alpha-D-muramoyl-L-alanyl-D-glutamate + ADP + phosphate + H(+). The protein operates within cell wall biogenesis; peptidoglycan biosynthesis. Cell wall formation. Catalyzes the addition of glutamate to the nucleotide precursor UDP-N-acetylmuramoyl-L-alanine (UMA). This Corynebacterium efficiens (strain DSM 44549 / YS-314 / AJ 12310 / JCM 11189 / NBRC 100395) protein is UDP-N-acetylmuramoylalanine--D-glutamate ligase.